The chain runs to 717 residues: Ribosomal RNA large subunit methyltransferase K/L (717 aa).

In terms of domain architecture, THUMP spans 44–155; that stretch reads DAYKVCIYSY…KQFVNVFLCL (112 aa).

This sequence belongs to the methyltransferase superfamily. RlmKL family.

It localises to the cytoplasm. It carries out the reaction guanosine(2445) in 23S rRNA + S-adenosyl-L-methionine = N(2)-methylguanosine(2445) in 23S rRNA + S-adenosyl-L-homocysteine + H(+). It catalyses the reaction guanosine(2069) in 23S rRNA + S-adenosyl-L-methionine = N(2)-methylguanosine(2069) in 23S rRNA + S-adenosyl-L-homocysteine + H(+). Specifically methylates the guanine in position 2445 (m2G2445) and the guanine in position 2069 (m7G2069) of 23S rRNA. The polypeptide is Ribosomal RNA large subunit methyltransferase K/L (Francisella tularensis subsp. holarctica (strain FTNF002-00 / FTA)).